Here is a 446-residue protein sequence, read N- to C-terminus: Inhibitor of Apoptosis OPG037 (446 aa).

6 ANK repeats span residues 71 to 100, 104 to 135, 207 to 237, 241 to 271, 296 to 325, and 327 to 351; these read DGNYPLHIASKINNNRIVAMLLTHGADPNA, QHKTPLYYLSGTDDEVIERINLLVQYGAKINN, DGNTPLHIVCSKTVKNVDIINLLLPSTDVNK, FGDSPLTLLIKTLSPAHLINKLLSTSNVITD, YDSTDFKMAVEVGSIRCIKYLLDNDIICED, and MYYAVLSEYETMVDYLLFNHFSVDS.

This sequence belongs to the orthopoxvirus OPG037 protein family. In terms of assembly, may interact with host caspase-9-Apaf-1 complex.

It localises to the host cytoplasm. Its function is as follows. Inhibits host apoptosis. Acts by associating with host apoptosome. In Variola virus (isolate Human/India/Ind3/1967) (VARV), this protein is Inhibitor of Apoptosis OPG037 (OPG037).